The sequence spans 393 residues: MKRPVTGKDLMIVNMGPHHPSMHGVLRLIVTLDGEDVVDCEPILGYLHRGMEKIAENRAIIQYLPYVTRWDYLATMFTEAITVNGPEQLGNIQVPKRASYIRVIMLELSRIASHLLWLGPFMADIGAQTPFFYIFREREFVYDLFEAATGMRMMHNFFRIGGIAADLPYGWIDKCLDFCDYFLTEVVEYQKLITRNPIFLERVEGVGIIGGEEAINWGLSGPMLRASGIPWDLRKIDRYESYDEFEWEIQWQKQGDSLARYLVRLSEMTESIKIIQQALEGLPGGPYENLESRGFDRKRNPEWNDFEYRFISKKPSPTFELSKQELYVRVEAPKGELGIFLIGDQSGFPWRWKIRPPGFINLQILPELVKRMKLADIMTILGSIDIIMGEVDR.

Belongs to the complex I 49 kDa subunit family. As to quaternary structure, NDH is composed of at least 16 different subunits, 5 of which are encoded in the nucleus. Interacts with the chaperonin CNP60B4 subunit.

The protein resides in the plastid. The protein localises to the chloroplast thylakoid membrane. The catalysed reaction is a plastoquinone + NADH + (n+1) H(+)(in) = a plastoquinol + NAD(+) + n H(+)(out). It catalyses the reaction a plastoquinone + NADPH + (n+1) H(+)(in) = a plastoquinol + NADP(+) + n H(+)(out). NDH shuttles electrons from NAD(P)H:plastoquinone, via FMN and iron-sulfur (Fe-S) centers, to quinones in the photosynthetic chain and possibly in a chloroplast respiratory chain. The immediate electron acceptor for the enzyme in this species is believed to be plastoquinone. Couples the redox reaction to proton translocation, and thus conserves the redox energy in a proton gradient. This chain is NAD(P)H-quinone oxidoreductase subunit H, chloroplastic, found in Arabidopsis thaliana (Mouse-ear cress).